A 195-amino-acid chain; its full sequence is ATP-dependent Clp protease proteolytic subunit (195 aa).

Catalysis depends on serine 97, which acts as the Nucleophile. Histidine 122 is a catalytic residue.

The protein belongs to the peptidase S14 family. As to quaternary structure, fourteen ClpP subunits assemble into 2 heptameric rings which stack back to back to give a disk-like structure with a central cavity, resembling the structure of eukaryotic proteasomes.

It is found in the cytoplasm. It catalyses the reaction Hydrolysis of proteins to small peptides in the presence of ATP and magnesium. alpha-casein is the usual test substrate. In the absence of ATP, only oligopeptides shorter than five residues are hydrolyzed (such as succinyl-Leu-Tyr-|-NHMec, and Leu-Tyr-Leu-|-Tyr-Trp, in which cleavage of the -Tyr-|-Leu- and -Tyr-|-Trp bonds also occurs).. Functionally, cleaves peptides in various proteins in a process that requires ATP hydrolysis. Has a chymotrypsin-like activity. Plays a major role in the degradation of misfolded proteins. The sequence is that of ATP-dependent Clp protease proteolytic subunit from Lactobacillus gasseri (strain ATCC 33323 / DSM 20243 / BCRC 14619 / CIP 102991 / JCM 1131 / KCTC 3163 / NCIMB 11718 / NCTC 13722 / AM63).